The sequence spans 230 residues: Orotidine 5'-phosphate decarboxylase (230 aa).

Substrate is bound by residues Asp10, Lys32, Asp59–Thr68, Thr118, Arg179, Gln188, Gly208, and Arg209. Lys61 functions as the Proton donor in the catalytic mechanism.

This sequence belongs to the OMP decarboxylase family. Type 1 subfamily. Homodimer.

The enzyme catalyses orotidine 5'-phosphate + H(+) = UMP + CO2. Its pathway is pyrimidine metabolism; UMP biosynthesis via de novo pathway; UMP from orotate: step 2/2. Its function is as follows. Catalyzes the decarboxylation of orotidine 5'-monophosphate (OMP) to uridine 5'-monophosphate (UMP). This chain is Orotidine 5'-phosphate decarboxylase, found in Opitutus terrae (strain DSM 11246 / JCM 15787 / PB90-1).